Consider the following 309-residue polypeptide: Ribosomal RNA small subunit methyltransferase H (309 aa).

Residues 32–34 (AGH), D52, F79, D100, and Q107 contribute to the S-adenosyl-L-methionine site.

This sequence belongs to the methyltransferase superfamily. RsmH family.

The protein localises to the cytoplasm. It catalyses the reaction cytidine(1402) in 16S rRNA + S-adenosyl-L-methionine = N(4)-methylcytidine(1402) in 16S rRNA + S-adenosyl-L-homocysteine + H(+). Its function is as follows. Specifically methylates the N4 position of cytidine in position 1402 (C1402) of 16S rRNA. This chain is Ribosomal RNA small subunit methyltransferase H, found in Mycoplasma capricolum subsp. capricolum (strain California kid / ATCC 27343 / NCTC 10154).